A 260-amino-acid chain; its full sequence is MACYIVPYYHHPVLSHPNREIFSHRHHHHHRFCNNLLNRRISVPRSSAISDGGVSYNTLVSEAVRLLVPQANFDSSKLKVEFLGELLENKSNGGIITPRTYILSHCDFTANLTLTISNVINLDQLEGWYKKDDVVAEWKKVNDELRLHIHCCVSGMSLLQDVAAELRYHIFSKELPLVLKAVVHGDSVMFRENPELMDAYVWVYFHSSTPKYNRIECWGPLKDAAKGKQQGNHQGFLSSTTSRKLIRHKSIFHTLFTFLL.

The N-terminal 45 residues, 1-45 (MACYIVPYYHHPVLSHPNREIFSHRHHHHHRFCNNLLNRRISVPR), are a transit peptide targeting the chloroplast.

It belongs to the staygreen family. Interacts with the light harvesting complex II (LHCII). Interacts with the chlorophyll catabolic enzymes (CCEs) NYC1, NOL, PAO and RCCR. In terms of tissue distribution, expressed in cotyledons, pollen and young leaves.

The protein localises to the plastid. It is found in the chloroplast thylakoid. The catalysed reaction is chlorophyllide a + 2 H(+) = pheophorbide a + Mg(2+). Magnesium chelatase involved in chlorophyll a degradation in the chlorophyll-protein complexes of photosystem I (PSI) and photosystem II (PSII). Contributes to the degradation of PSI and PSII in the thylakoid membranes. Recombinant SGRL possesses high dechelating activity against chlorophyllide a, very low activity against chlorophyll a, and no activity against chlorophyll b. Contributes to abiotic stress-induced chlorophyll degradation and leaf yellowing during vegetative plant growth. The polypeptide is Magnesium dechelatase SGRL, chloroplastic (Arabidopsis thaliana (Mouse-ear cress)).